Here is a 462-residue protein sequence, read N- to C-terminus: Fez family zinc finger protein 1 (462 aa).

Positions 34-49 match the Engrailed homology 1 repressor motif; the sequence is PLAFSIERIMSRTPEP. 6 C2H2-type zinc fingers span residues 260–282, 288–310, 316–338, 344–366, 372–394, and 400–423; these read FTCEVCGKVFNAHYNLTRHMPVH, FVCKICGKGFRQASTLCRHKIIH, HKCNQCGKAFNRSSTLNTHTRIH, FVCEFCGKGFHQKGNYKNHKLTH, FKCNICNKAFHQIYNLTFHMHTH, and FTCPTCGKGFCRNFDLKKHVRKLH. Residues 441–462 form a disordered region; that stretch reads LLLPNREPSPTIQSPQLQKSGY. A compositionally biased stretch (polar residues) spans 448–462; the sequence is PSPTIQSPQLQKSGY.

It belongs to the krueppel C2H2-type zinc-finger protein family.

The protein resides in the nucleus. Its function is as follows. Transcription repressor. Involved in the development of the forebrain region. The protein is Fez family zinc finger protein 1 (fezf1) of Xenopus tropicalis (Western clawed frog).